The sequence spans 301 residues: 4-hydroxy-tetrahydrodipicolinate synthase (301 aa).

Thr53 contacts pyruvate. Tyr142 (proton donor/acceptor) is an active-site residue. Residue Lys170 is the Schiff-base intermediate with substrate of the active site. Val212 serves as a coordination point for pyruvate.

It belongs to the DapA family. As to quaternary structure, homotetramer; dimer of dimers.

The protein resides in the cytoplasm. It catalyses the reaction L-aspartate 4-semialdehyde + pyruvate = (2S,4S)-4-hydroxy-2,3,4,5-tetrahydrodipicolinate + H2O + H(+). The protein operates within amino-acid biosynthesis; L-lysine biosynthesis via DAP pathway; (S)-tetrahydrodipicolinate from L-aspartate: step 3/4. Functionally, catalyzes the condensation of (S)-aspartate-beta-semialdehyde [(S)-ASA] and pyruvate to 4-hydroxy-tetrahydrodipicolinate (HTPA). In Synechocystis sp. (strain ATCC 27184 / PCC 6803 / Kazusa), this protein is 4-hydroxy-tetrahydrodipicolinate synthase.